The chain runs to 178 residues: Inner membrane-spanning protein YciB (178 aa).

5 helical membrane passes run 22 to 42, 50 to 70, 72 to 92, 121 to 141, and 149 to 169; these read IFYA…MTYF, ASLI…AFHS, LFIK…LLGS, MAWA…AFWL, and FKVF…VVYI.

Belongs to the YciB family.

It is found in the cell inner membrane. Plays a role in cell envelope biogenesis, maintenance of cell envelope integrity and membrane homeostasis. In Photorhabdus laumondii subsp. laumondii (strain DSM 15139 / CIP 105565 / TT01) (Photorhabdus luminescens subsp. laumondii), this protein is Inner membrane-spanning protein YciB.